A 198-amino-acid chain; its full sequence is Na(+)-translocating NADH-quinone reductase subunit E (198 aa).

The next 6 membrane-spanning stretches (helical) occupy residues 11 to 31 (SIFI…FLAV), 39 to 59 (FGLG…NNLV), 77 to 97 (FLNF…LEMV), 110 to 130 (GIFL…SFMV), 140 to 160 (IVYG…LAGI), and 176 to 196 (LGIT…FSGV).

Belongs to the NqrDE/RnfAE family. Composed of six subunits; NqrA, NqrB, NqrC, NqrD, NqrE and NqrF.

It is found in the cell inner membrane. It catalyses the reaction a ubiquinone + n Na(+)(in) + NADH + H(+) = a ubiquinol + n Na(+)(out) + NAD(+). Its function is as follows. NQR complex catalyzes the reduction of ubiquinone-1 to ubiquinol by two successive reactions, coupled with the transport of Na(+) ions from the cytoplasm to the periplasm. NqrA to NqrE are probably involved in the second step, the conversion of ubisemiquinone to ubiquinol. The sequence is that of Na(+)-translocating NADH-quinone reductase subunit E from Aliivibrio salmonicida (strain LFI1238) (Vibrio salmonicida (strain LFI1238)).